A 259-amino-acid polypeptide reads, in one-letter code: Thiazole synthase (259 aa).

Residue K99 is the Schiff-base intermediate with DXP of the active site. Residues G160, 186–187 (AG), and 208–209 (NT) each bind 1-deoxy-D-xylulose 5-phosphate.

Belongs to the ThiG family. In terms of assembly, homotetramer. Forms heterodimers with either ThiH or ThiS.

The protein resides in the cytoplasm. The catalysed reaction is [ThiS sulfur-carrier protein]-C-terminal-Gly-aminoethanethioate + 2-iminoacetate + 1-deoxy-D-xylulose 5-phosphate = [ThiS sulfur-carrier protein]-C-terminal Gly-Gly + 2-[(2R,5Z)-2-carboxy-4-methylthiazol-5(2H)-ylidene]ethyl phosphate + 2 H2O + H(+). The protein operates within cofactor biosynthesis; thiamine diphosphate biosynthesis. Functionally, catalyzes the rearrangement of 1-deoxy-D-xylulose 5-phosphate (DXP) to produce the thiazole phosphate moiety of thiamine. Sulfur is provided by the thiocarboxylate moiety of the carrier protein ThiS. In vitro, sulfur can be provided by H(2)S. The polypeptide is Thiazole synthase (Porphyromonas gingivalis (strain ATCC BAA-308 / W83)).